Reading from the N-terminus, the 108-residue chain is Thioredoxin (108 aa).

The region spanning 2–108 is the Thioredoxin domain; sequence SDAILYVSDD…QLTAFLDSQL (107 aa). Cys-33 and Cys-36 are oxidised to a cystine.

It belongs to the thioredoxin family.

Its function is as follows. Component of the thioredoxin-thioredoxin reductase system. Participates in various redox reactions through the reversible oxidation of its active center dithiol to a disulfide and catalyzes dithiol-disulfide exchange reactions. The polypeptide is Thioredoxin (trxA) (Acidithiobacillus ferridurans).